The chain runs to 572 residues: Proline--tRNA ligase (572 aa).

Belongs to the class-II aminoacyl-tRNA synthetase family. ProS type 1 subfamily. As to quaternary structure, homodimer.

The protein localises to the cytoplasm. The catalysed reaction is tRNA(Pro) + L-proline + ATP = L-prolyl-tRNA(Pro) + AMP + diphosphate. Catalyzes the attachment of proline to tRNA(Pro) in a two-step reaction: proline is first activated by ATP to form Pro-AMP and then transferred to the acceptor end of tRNA(Pro). As ProRS can inadvertently accommodate and process non-cognate amino acids such as alanine and cysteine, to avoid such errors it has two additional distinct editing activities against alanine. One activity is designated as 'pretransfer' editing and involves the tRNA(Pro)-independent hydrolysis of activated Ala-AMP. The other activity is designated 'posttransfer' editing and involves deacylation of mischarged Ala-tRNA(Pro). The misacylated Cys-tRNA(Pro) is not edited by ProRS. The chain is Proline--tRNA ligase from Buchnera aphidicola subsp. Acyrthosiphon pisum (strain 5A).